The following is a 204-amino-acid chain: Proteasome subunit beta type-3 (204 aa).

This sequence belongs to the peptidase T1B family. As to quaternary structure, the 26S proteasome consists of a 20S proteasome core and two 19S regulatory subunits. The 20S proteasome core is composed of 28 subunits that are arranged in four stacked rings, resulting in a barrel-shaped structure. The two end rings are each formed by seven alpha subunits, and the two central rings are each formed by seven beta subunits. The catalytic chamber with the active sites is on the inside of the barrel.

The protein resides in the cytoplasm. It localises to the nucleus. In terms of biological role, non-catalytic component of the proteasome, a multicatalytic proteinase complex which is characterized by its ability to cleave peptides with Arg, Phe, Tyr, Leu, and Glu adjacent to the leaving group at neutral or slightly basic pH. The proteasome has an ATP-dependent proteolytic activity. This is Proteasome subunit beta type-3 (pbs-3) from Caenorhabditis elegans.